Consider the following 116-residue polypeptide: Phosphoribosyl-AMP cyclohydrolase (116 aa).

Position 82 (aspartate 82) interacts with Mg(2+). Position 83 (cysteine 83) interacts with Zn(2+). The Mg(2+) site is built by aspartate 84 and aspartate 86. Residues cysteine 99 and cysteine 106 each contribute to the Zn(2+) site.

This sequence belongs to the PRA-CH family. Homodimer. Mg(2+) is required as a cofactor. Requires Zn(2+) as cofactor.

Its subcellular location is the cytoplasm. It carries out the reaction 1-(5-phospho-beta-D-ribosyl)-5'-AMP + H2O = 1-(5-phospho-beta-D-ribosyl)-5-[(5-phospho-beta-D-ribosylamino)methylideneamino]imidazole-4-carboxamide. Its pathway is amino-acid biosynthesis; L-histidine biosynthesis; L-histidine from 5-phospho-alpha-D-ribose 1-diphosphate: step 3/9. Catalyzes the hydrolysis of the adenine ring of phosphoribosyl-AMP. The chain is Phosphoribosyl-AMP cyclohydrolase from Saccharopolyspora erythraea (strain ATCC 11635 / DSM 40517 / JCM 4748 / NBRC 13426 / NCIMB 8594 / NRRL 2338).